The primary structure comprises 218 residues: MSDVEWSVLPGLSPYQETLSAMEARVAAIRAGDAPEAVWLLEHPPLYTAGTSARPEDLVEPDRFPVHVAGRGGQYTYHGPGQRVAYVMLDLDRRGRDVRRFVCALEDWVIATLAEFNVKGERRAGRVGVWVVRPDRAPGPDGQPREDKIAAIGVKLRRWVSFHGLSINLEPDLSHFEGIVPCGIREHGVTSLVDLGLPVTMQDLDAALLRTFSRSFPD.

The region spanning 32-218 (GDAPEAVWLL…LRTFSRSFPD (187 aa)) is the BPL/LPL catalytic domain. Residues 71-78 (RGGQYTYH), 151-153 (AIG), and 164-166 (GLS) each bind substrate. The active-site Acyl-thioester intermediate is the Cys-182.

This sequence belongs to the LipB family.

The protein localises to the cytoplasm. The enzyme catalyses octanoyl-[ACP] + L-lysyl-[protein] = N(6)-octanoyl-L-lysyl-[protein] + holo-[ACP] + H(+). It participates in protein modification; protein lipoylation via endogenous pathway; protein N(6)-(lipoyl)lysine from octanoyl-[acyl-carrier-protein]: step 1/2. In terms of biological role, catalyzes the transfer of endogenously produced octanoic acid from octanoyl-acyl-carrier-protein onto the lipoyl domains of lipoate-dependent enzymes. Lipoyl-ACP can also act as a substrate although octanoyl-ACP is likely to be the physiological substrate. This Cereibacter sphaeroides (strain ATCC 17025 / ATH 2.4.3) (Rhodobacter sphaeroides) protein is Octanoyltransferase.